Consider the following 38-residue polypeptide: Photosystem II reaction center protein L (38 aa).

Residues 17 to 37 (SLFLGRLLIFVLGILFSSYIF) form a helical membrane-spanning segment.

Belongs to the PsbL family. PSII is composed of 1 copy each of membrane proteins PsbA, PsbB, PsbC, PsbD, PsbE, PsbF, PsbH, PsbI, PsbJ, PsbK, PsbL, PsbM, PsbT, PsbX, PsbY, PsbZ, Psb30/Ycf12, peripheral proteins PsbO, CyanoQ (PsbQ), PsbU, PsbV and a large number of cofactors. It forms dimeric complexes.

The protein resides in the cellular thylakoid membrane. Functionally, one of the components of the core complex of photosystem II (PSII). PSII is a light-driven water:plastoquinone oxidoreductase that uses light energy to abstract electrons from H(2)O, generating O(2) and a proton gradient subsequently used for ATP formation. It consists of a core antenna complex that captures photons, and an electron transfer chain that converts photonic excitation into a charge separation. This subunit is found at the monomer-monomer interface and is required for correct PSII assembly and/or dimerization. This is Photosystem II reaction center protein L from Prochlorothrix hollandica.